A 693-amino-acid chain; its full sequence is Protein-glutamine gamma-glutamyltransferase E (693 aa).

Tyr111 is modified (phosphotyrosine). Thr112 carries the phosphothreonine modification. Residues Ala222, Asn225, Asn227, Asp228, and Asn230 each contribute to the Ca(2+) site. Cys273 is a catalytic residue. Ca(2+) is bound by residues Asp302, Asp304, Asn306, Ser308, and Asp325. Active-site residues include His331 and Asp354. Residues Asn394, Thr416, Glu444, and Glu449 each coordinate Ca(2+). The tract at residues 457 to 483 (LDKLKPNASFGATSSRNPEGEDKEPSI) is disordered.

It belongs to the transglutaminase superfamily. Transglutaminase family. As to quaternary structure, consists of two polypeptide chains, which are synthesized as a precursor form of a single polypeptide. Ca(2+) serves as cofactor. Activated by proteolytic processing. In vitro activation is commonly achieved by cleavage with dispase, a neutral bacterial protease. Physiological activation may be catalyzed by CTSL and, to a lesser extent, by CTSS. Expressed in skin and stomach and, at lower levels, in testis, kidney and spleen (at protein level). On the basis of its catalytic activity, detected in the epidermis, around the granular and spinous layers but not in the outermost cornified layers. In hair follicles, mainly located in the medulla and the hair cortex.

It localises to the cytoplasm. It catalyses the reaction L-glutaminyl-[protein] + L-lysyl-[protein] = [protein]-L-lysyl-N(6)-5-L-glutamyl-[protein] + NH4(+). Functionally, catalyzes the calcium-dependent formation of isopeptide cross-links between glutamine and lysine residues in various proteins, as well as the conjugation of polyamines to proteins. Involved in the formation of the cornified envelope (CE), a specialized component consisting of covalent cross-links of proteins beneath the plasma membrane of terminally differentiated keratinocytes. Catalyzes small proline-rich proteins (SPRR1 and SPRR2) and LOR cross-linking to form small interchain oligomers, which are further cross-linked by TGM1 onto the growing CE scaffold. In hair follicles, involved in cross-linking structural proteins to hardening the inner root sheath. The sequence is that of Protein-glutamine gamma-glutamyltransferase E (Tgm3) from Mus musculus (Mouse).